Here is a 1484-residue protein sequence, read N- to C-terminus: Cystic fibrosis transmembrane conductance regulator (1484 aa).

Topologically, residues 1–77 (MQRSPLERAN…KLINALRRCF (77 aa)) are cytoplasmic. Residues 78–98 (FWRFMFYGLLLYLGEVTKAVQ) traverse the membrane as a helical segment. Residues 81-365 (FMFYGLLLYL…WAVQMWYDSI (285 aa)) form the ABC transmembrane type-1 1 domain. Over 99 to 122 (PLLLGRIIASYDPDNAHERSIAYY) the chain is Extracellular. Residues 123–146 (LGIGLCLLFIVRTLLLHPAVFGLH) form a helical membrane-spanning segment. Topologically, residues 147–195 (HIGMQMRIALFSLIYKKTLKLSSRVLDKISTGQLVSLLSNNLNKFDEGL) are cytoplasmic. The chain crosses the membrane as a helical span at residues 196-216 (ALAHFVWIAPLQVMLLMGLLW). The Extracellular segment spans residues 217–222 (DLLQAS). A helical membrane pass occupies residues 223-243 (AFCGLAVLVVLVLFQAWLGHR). Residues 244-298 (MMKYRDRRAGKINERLVITAEIIENIQSVKAYCWEEAMENMIESLRETELKLTRK) lie on the Cytoplasmic side of the membrane. Residues 299–319 (AAYMRYFNSSAFFFSGFFVVF) traverse the membrane as a helical segment. Residues 320–339 (LSVLPSMLTKGIVLRKIFTT) lie on the Extracellular side of the membrane. Residues 340-358 (ISFCIVLRMAVTRQFPWAV) form a helical membrane-spanning segment. The Cytoplasmic segment spans residues 359–859 (QMWYDSIGAI…YLRYMTIHKK (501 aa)). ATP contacts are provided by residues W401, S434, 458-465 (GSTGAGKT), and Q493. The ABC transporter 1 domain occupies 423 to 646 (SDDKNLIFSN…RPDFSSKLMG (224 aa)). C524 is lipidated: S-palmitoyl cysteine. S549 and S660 each carry phosphoserine. The segment at 654–832 (SAERRNSILT…EEINEEDLKE (179 aa)) is disordered R region. S670 is modified (phosphoserine; by PKA). S686 bears the Phosphoserine mark. A Glycyl lysine isopeptide (Lys-Gly) (interchain with G-Cter in ubiquitin) cross-link involves residue K688. Phosphoserine is present on residues S700, S712, S737, S768, S791, S796, and S814. A helical transmembrane segment spans residues 860–880 (LIFVLMMCLVIFLIEVAASLV). The ABC transmembrane type-1 2 domain occupies 860–1159 (LIFVLMMCLV…AVNASIDVDS (300 aa)). Topologically, residues 881–922 (GLCLFKDGASRMNSTSNLNHTSTLDWFAVIVTNTSTYYMFYI) are extracellular. N-linked (GlcNAc...) asparagine glycans are attached at residues N893, N899, and N913. A discontinuously helical transmembrane segment spans residues 923-943 (YVGVADTLLALGFLRGLPLVH). Over 944 to 994 (SLISVSKILHQKMLHSVLQAPMSTFNTLKTGSILNRFSKDMAILDDLLPLT) the chain is Cytoplasmic. Residues 995–1015 (IFDFIQLLLIVIGAVTVVSAL) traverse the membrane as a helical segment. Topologically, residues 1016 to 1017 (QP) are extracellular. Residues 1018–1038 (YIFLASVPVVIAFVLLRAYFL) form a helical membrane-spanning segment. Over 1039–1099 (RTSQQLKQLE…TANWFLYLST (61 aa)) the chain is Cytoplasmic. The chain crosses the membrane as a helical span at residues 1100–1120 (LRWFQMRIEMVFVIFFILVTF). Residues 1121–1134 (ISILTTGDGEGKVG) are Extracellular-facing. A helical membrane pass occupies residues 1135–1155 (IVLTLAMNIMGTLQWAVNASI). Over 1156-1484 (DVDSLMRSVS…TEEEVQDTRL (329 aa)) the chain is Cytoplasmic. Residues 1212 to 1445 (MTVQDLTAKY…KSVFKQAISH (234 aa)) enclose the ABC transporter 2 domain. Residues Y1221 and 1246–1253 (GRTGSGKS) contribute to the ATP site. The interaction with GORASP2 stretch occupies residues 1388–1484 (KTLKQAFTNC…TEEEVQDTRL (97 aa)). C1397 carries S-palmitoyl cysteine lipidation. Phosphoserine occurs at positions 1446 and 1460. The segment at 1463-1484 (LSRPKITALQEETEEEVQDTRL) is disordered. Acidic residues predominate over residues 1473-1484 (EETEEEVQDTRL). A PDZ-binding motif is present at residues 1482-1484 (TRL).

The protein belongs to the ABC transporter superfamily. ABCC family. CFTR transporter (TC 3.A.1.202) subfamily. In terms of assembly, monomer; does not require oligomerization for channel activity. May form oligomers in the membrane. Interacts with SLC26A3, SLC26A6 and NHERF1. Interacts with SHANK2. Interacts with MYO6. Interacts (via C-terminus) with GOPC (via PDZ domain); this promotes CFTR internalization and thereby decreases channel activity. Interacts with SLC4A7 through NHERF1. Found in a complex with MYO5B and RAB11A. Interacts with ANO1. Interacts with SLC26A8. Interacts with AHCYL1; the interaction increases CFTR activity. Interacts with CSE1L. The core-glycosylated form interacts with GORASP2 (via PDZ GRASP-type 1 domain) in respone to ER stress. Interacts with MARCHF2; the interaction leads to CFTR ubiqtuitination and degradation. Interacts with ADGRG2. Post-translationally, N-glycosylated. In terms of processing, phosphorylated; cAMP treatment promotes phosphorylation and activates the channel. Dephosphorylation decreases the ATPase activity (in vitro). Phosphorylation at PKA sites activates the channel. Phosphorylation at PKC sites enhances the response to phosphorylation by PKA. Phosphorylated by AMPK; this inhibits channel activity. Ubiquitinated, leading to its degradation in the lysosome. Deubiquitination by USP10 in early endosomes enhances its endocytic recycling to the cell membrane. Ubiquitinated by RNF185 during ER stress. Ubiquitinated by MARCHF2.

The protein resides in the apical cell membrane. It is found in the early endosome membrane. The protein localises to the cell membrane. It localises to the recycling endosome membrane. Its subcellular location is the endoplasmic reticulum membrane. The protein resides in the nucleus. The catalysed reaction is ATP + H2O + closed Cl(-) channel = ADP + phosphate + open Cl(-) channel.. The enzyme catalyses chloride(in) = chloride(out). It catalyses the reaction hydrogencarbonate(in) = hydrogencarbonate(out). It carries out the reaction ATP + H2O = ADP + phosphate + H(+). Functionally, epithelial ion channel that plays an important role in the regulation of epithelial ion and water transport and fluid homeostasis. Mediates the transport of chloride ions across the cell membrane. Possesses an intrinsic ATPase activity and utilizes ATP to gate its channel; the passive flow of anions through the channel is gated by cycles of ATP binding and hydrolysis by the ATP-binding domains. The ion channel is also permeable to HCO(3)(-); selectivity depends on the extracellular chloride concentration. Exerts its function also by modulating the activity of other ion channels and transporters. Contributes to the regulation of the pH and the ion content of the epithelial fluid layer. Modulates the activity of the epithelial sodium channel (ENaC) complex, in part by regulating the cell surface expression of the ENaC complex. May regulate bicarbonate secretion and salvage in epithelial cells by regulating the transporter SLC4A7. Can inhibit the chloride channel activity of ANO1. Plays a role in the chloride and bicarbonate homeostasis during sperm epididymal maturation and capacitation. The protein is Cystic fibrosis transmembrane conductance regulator of Ornithorhynchus anatinus (Duckbill platypus).